Consider the following 335-residue polypeptide: Trans-1,2-dihydrobenzene-1,2-diol dehydrogenase (335 aa).

This sequence belongs to the Gfo/Idh/MocA family. As to quaternary structure, homodimer.

It catalyses the reaction (1R,2R)-1,2-dihydrobenzene-1,2-diol + NADP(+) = catechol + NADPH + H(+). The catalysed reaction is D-xylose + NADP(+) = D-xylono-1,5-lactone + NADPH + H(+). The protein is Trans-1,2-dihydrobenzene-1,2-diol dehydrogenase (DHDH) of Bos taurus (Bovine).